The sequence spans 146 residues: UPF0260 protein Sden_1632 (146 aa).

The protein belongs to the UPF0260 family.

This Shewanella denitrificans (strain OS217 / ATCC BAA-1090 / DSM 15013) protein is UPF0260 protein Sden_1632.